The following is a 208-amino-acid chain: Glutathione S-transferase F6 (208 aa).

Positions 2–83 (AGIKVFGHPA…YIAHEFSDKG (82 aa)) constitute a GST N-terminal domain. Residues 12–13 (ST), 41–42 (HK), 54–55 (KV), and 67–68 (ES) each bind glutathione. Residues 89–208 (TGKDMAIIAM…TSRPSAQKVL (120 aa)) enclose the GST C-terminal domain.

This sequence belongs to the GST superfamily. Phi family.

Its subcellular location is the cytoplasm. It localises to the cytosol. The enzyme catalyses RX + glutathione = an S-substituted glutathione + a halide anion + H(+). Its function is as follows. Involved in camalexin biosynthesis by probably catalyzing the conjugation of GSH with indole-3-acetonitrile (IAN). May be involved in the conjugation of reduced glutathione to a wide number of exogenous and endogenous hydrophobic electrophiles and have a detoxification role against certain herbicides. This chain is Glutathione S-transferase F6 (GSTF6), found in Arabidopsis thaliana (Mouse-ear cress).